The chain runs to 382 residues: MTTSTVKTNLLGLTQPEMEKFFDSIGEKRFRAGQVMKWIHHFGVDDFDAMTNVSKALRDKLKAIAEVRGPEVVSEDISSDGTRKWVVRVASGSCVETVYIPQGKRGTLCVSSQAGCALDCSFCSTGKQGFNSNLTAAEVIGQVWIANKSFGSVPATVDRAITNVVMMGMGEPLLNFDNVIAAMHLMMDDLGYGISKRRVTLSTSGVVPMIDELAKHIDVSLALSLHAPNDALRNQLVPINKKYPLKMLLESCQRYMATLGEKRVLTIEYTMLKDINDKVEHAVEMIELLKNTPCKINLIPFNPFPHSGYERPSNNAIRRFQDQLHQAGYNVTVRTTRGEDIDAACGQLVGQVMDRTRRSERYIAVRELNAADDLPQIAVNRI.

Catalysis depends on Glu-96, which acts as the Proton acceptor. The Radical SAM core domain maps to 102–342 (QGKRGTLCVS…VRTTRGEDID (241 aa)). The cysteines at positions 109 and 345 are disulfide-linked. Residues Cys-116, Cys-120, and Cys-123 each contribute to the [4Fe-4S] cluster site. Residues 170–171 (GE), Ser-202, 224–226 (SLH), and Asn-302 each bind S-adenosyl-L-methionine. Cys-345 (S-methylcysteine intermediate) is an active-site residue.

This sequence belongs to the radical SAM superfamily. RlmN family. The cofactor is [4Fe-4S] cluster.

It is found in the cytoplasm. It carries out the reaction adenosine(2503) in 23S rRNA + 2 reduced [2Fe-2S]-[ferredoxin] + 2 S-adenosyl-L-methionine = 2-methyladenosine(2503) in 23S rRNA + 5'-deoxyadenosine + L-methionine + 2 oxidized [2Fe-2S]-[ferredoxin] + S-adenosyl-L-homocysteine. The enzyme catalyses adenosine(37) in tRNA + 2 reduced [2Fe-2S]-[ferredoxin] + 2 S-adenosyl-L-methionine = 2-methyladenosine(37) in tRNA + 5'-deoxyadenosine + L-methionine + 2 oxidized [2Fe-2S]-[ferredoxin] + S-adenosyl-L-homocysteine. Its function is as follows. Specifically methylates position 2 of adenine 2503 in 23S rRNA and position 2 of adenine 37 in tRNAs. m2A2503 modification seems to play a crucial role in the proofreading step occurring at the peptidyl transferase center and thus would serve to optimize ribosomal fidelity. This Pseudomonas fluorescens (strain SBW25) protein is Dual-specificity RNA methyltransferase RlmN.